The chain runs to 295 residues: Probable dTDP-4,6-dihydroxy-2-methyloxan-3-one 4-ketoreductase (295 aa).

Residues 10–12, 36–37, 60–62, Y126, and K130 each bind NADH; these read GML, DV, and AYT. NADPH contacts are provided by residues 11 to 12, 36 to 37, 60 to 62, Y126, and K130; these read ML, DV, and AYT. The active-site Proton donor/acceptor is Y126.

Belongs to the dTDP-4-dehydrorhamnose reductase family. Mg(2+) serves as cofactor.

The protein operates within antibiotic biosynthesis. In terms of biological role, involved in the biosynthesis of one of the two 2,6-deoxysugars, dTDP-L-oleandrose, attached to the macrolactone ring oleandolide to produce the aglycone antibiotic oleandomycin. Probably catalyzes the reduction of dTDP-4-keto-2,6-dideoxy-beta-L-galactose to yield dTDP-L-olivose. The chain is Probable dTDP-4,6-dihydroxy-2-methyloxan-3-one 4-ketoreductase from Streptomyces antibioticus.